Consider the following 673-residue polypeptide: NADH-quinone oxidoreductase chain 3 (673 aa).

The region spanning 5 to 90 (RKIKIDDTII…PSEIRTNSPM (86 aa)) is the 2Fe-2S ferredoxin-type domain. [2Fe-2S] cluster contacts are provided by Cys-37, Cys-48, Cys-51, and Cys-66. A 4Fe-4S His(Cys)3-ligated-type domain is found at 90–129 (MVKKAREGVMEFLLINHPLDCPICDQGGECDLQDQAMAYG). [4Fe-4S] cluster is bound by residues His-106, Cys-110, Cys-113, Cys-119, Cys-158, Cys-161, Cys-164, and Cys-208. The 57-residue stretch at 227–283 (LTKTESIDVMDALGSSIRIDTKGREVMRILPRNHDGVNEEWISDKTRFVWDGLRRQR) folds into the 4Fe-4S Mo/W bis-MGD-type domain.

This sequence belongs to the complex I 75 kDa subunit family. In terms of assembly, NDH-1 is composed of at least 14 different subunits, Nqo1 to Nqo14. The complex has a L-shaped structure, with the hydrophobic arm (subunits Nqo7, Nqo8, Nqo10 to Nqo14) embedded in the inner membrane and the hydrophilic peripheral arm (subunits Nqo1 to Nqo6, Nqo9) protruding into the bacterial cytoplasm. The hydrophilic domain contains all the redox centers. It depends on [2Fe-2S] cluster as a cofactor. Requires [4Fe-4S] cluster as cofactor.

Its subcellular location is the cell inner membrane. It catalyses the reaction a quinone + NADH + 5 H(+)(in) = a quinol + NAD(+) + 4 H(+)(out). In terms of biological role, NDH-1 shuttles electrons from NADH, via FMN and iron-sulfur (Fe-S) centers, to quinones in the respiratory chain. The immediate electron acceptor for the enzyme in this species is believed to be ubiquinone. Couples the redox reaction to proton translocation (for every two electrons transferred, four hydrogen ions are translocated across the cytoplasmic membrane), and thus conserves the redox energy in a proton gradient. The chain is NADH-quinone oxidoreductase chain 3 from Paracoccus denitrificans.